Reading from the N-terminus, the 338-residue chain is N-acetyl-gamma-glutamyl-phosphate reductase (338 aa).

C148 is an active-site residue.

The protein belongs to the NAGSA dehydrogenase family. Type 1 subfamily.

It is found in the cytoplasm. The catalysed reaction is N-acetyl-L-glutamate 5-semialdehyde + phosphate + NADP(+) = N-acetyl-L-glutamyl 5-phosphate + NADPH + H(+). Its pathway is amino-acid biosynthesis; L-arginine biosynthesis; N(2)-acetyl-L-ornithine from L-glutamate: step 3/4. Its function is as follows. Catalyzes the NADPH-dependent reduction of N-acetyl-5-glutamyl phosphate to yield N-acetyl-L-glutamate 5-semialdehyde. The sequence is that of N-acetyl-gamma-glutamyl-phosphate reductase from Leptospira borgpetersenii serovar Hardjo-bovis (strain JB197).